The following is a 467-amino-acid chain: Chromosomal replication initiator protein DnaA (467 aa).

The tract at residues 1 to 74 (MSADVWSQGC…ESVLSDLAGK (74 aa)) is domain I, interacts with DnaA modulators. The tract at residues 74–130 (KPVRLDLQLAAREAPPRPSSDAPRSNGHPQAAGQWLGAPSSSNAGAYTQASAPTPTH) is domain II. The interval 85–127 (REAPPRPSSDAPRSNGHPQAAGQWLGAPSSSNAGAYTQASAPT) is disordered. Residues 112–127 (PSSSNAGAYTQASAPT) show a composition bias toward polar residues. Positions 131 to 347 (RLNTALTFDT…GALRKVLAYA (217 aa)) are domain III, AAA+ region. Residues glycine 175, glycine 177, lysine 178, and threonine 179 each coordinate ATP. Residues 348–467 (RFSQKDINIA…LHVLEQTLKG (120 aa)) form a domain IV, binds dsDNA region.

It belongs to the DnaA family. As to quaternary structure, oligomerizes as a right-handed, spiral filament on DNA at oriC.

The protein localises to the cytoplasm. In terms of biological role, plays an essential role in the initiation and regulation of chromosomal replication. ATP-DnaA binds to the origin of replication (oriC) to initiate formation of the DNA replication initiation complex once per cell cycle. Binds the DnaA box (a 9 base pair repeat at the origin) and separates the double-stranded (ds)DNA. Forms a right-handed helical filament on oriC DNA; dsDNA binds to the exterior of the filament while single-stranded (ss)DNA is stabiized in the filament's interior. The ATP-DnaA-oriC complex binds and stabilizes one strand of the AT-rich DNA unwinding element (DUE), permitting loading of DNA polymerase. After initiation quickly degrades to an ADP-DnaA complex that is not apt for DNA replication. Binds acidic phospholipids. The chain is Chromosomal replication initiator protein DnaA from Methylibium petroleiphilum (strain ATCC BAA-1232 / LMG 22953 / PM1).